Here is a 521-residue protein sequence, read N- to C-terminus: Bifunctional purine biosynthesis protein PurH (521 aa).

Residues 1–145 (MIKQALISVS…KNHRDVTVVV (145 aa)) form the MGS-like domain.

It belongs to the PurH family.

The enzyme catalyses (6R)-10-formyltetrahydrofolate + 5-amino-1-(5-phospho-beta-D-ribosyl)imidazole-4-carboxamide = 5-formamido-1-(5-phospho-D-ribosyl)imidazole-4-carboxamide + (6S)-5,6,7,8-tetrahydrofolate. The catalysed reaction is IMP + H2O = 5-formamido-1-(5-phospho-D-ribosyl)imidazole-4-carboxamide. Its pathway is purine metabolism; IMP biosynthesis via de novo pathway; 5-formamido-1-(5-phospho-D-ribosyl)imidazole-4-carboxamide from 5-amino-1-(5-phospho-D-ribosyl)imidazole-4-carboxamide (10-formyl THF route): step 1/1. The protein operates within purine metabolism; IMP biosynthesis via de novo pathway; IMP from 5-formamido-1-(5-phospho-D-ribosyl)imidazole-4-carboxamide: step 1/1. The polypeptide is Bifunctional purine biosynthesis protein PurH (Burkholderia cenocepacia (strain ATCC BAA-245 / DSM 16553 / LMG 16656 / NCTC 13227 / J2315 / CF5610) (Burkholderia cepacia (strain J2315))).